The primary structure comprises 53 residues: UPF0391 membrane protein PA5482 (53 aa).

2 helical membrane passes run 4-24 (WAIT…GGIA) and 29-49 (GIAK…FFFG).

This sequence belongs to the UPF0391 family.

The protein localises to the cell membrane. This is UPF0391 membrane protein PA5482 from Pseudomonas aeruginosa (strain ATCC 15692 / DSM 22644 / CIP 104116 / JCM 14847 / LMG 12228 / 1C / PRS 101 / PAO1).